The primary structure comprises 298 residues: Ribosomal protein uL3 glutamine methyltransferase (298 aa).

The protein belongs to the protein N5-glutamine methyltransferase family. PrmB subfamily.

The catalysed reaction is L-glutaminyl-[ribosomal protein uL3] + S-adenosyl-L-methionine = N(5)-methyl-L-glutaminyl-[ribosomal protein uL3] + S-adenosyl-L-homocysteine + H(+). Functionally, methylates large ribosomal subunit protein uL3 on a specific glutamine residue. This chain is Ribosomal protein uL3 glutamine methyltransferase, found in Bordetella pertussis (strain Tohama I / ATCC BAA-589 / NCTC 13251).